Reading from the N-terminus, the 457-residue chain is Histidine--tRNA ligase (457 aa).

The protein belongs to the class-II aminoacyl-tRNA synthetase family. In terms of assembly, homodimer.

The protein localises to the cytoplasm. The catalysed reaction is tRNA(His) + L-histidine + ATP = L-histidyl-tRNA(His) + AMP + diphosphate + H(+). In Mesoplasma florum (strain ATCC 33453 / NBRC 100688 / NCTC 11704 / L1) (Acholeplasma florum), this protein is Histidine--tRNA ligase.